We begin with the raw amino-acid sequence, 708 residues long: uncharacterized protein (708 aa).

4 disordered regions span residues Met-1–Ser-79, Ala-119–Arg-301, Tyr-349–Asn-390, and Ser-410–Arg-461. Over residues Leu-65–Val-74 the composition is skewed to pro residues. Residues Asp-238–Ala-249 show a composition bias toward polar residues. The segment covering Ser-260–Gly-274 has biased composition (low complexity). Positions Ser-410–Arg-419 are enriched in polar residues. Positions Val-442–Arg-461 are enriched in basic and acidic residues.

This is an uncharacterized protein from Arabidopsis thaliana (Mouse-ear cress).